Here is a 486-residue protein sequence, read N- to C-terminus: Palmitoyltransferase pfa4 (486 aa).

The Cytoplasmic segment spans residues 1–15 (MTNLQTGPTTRGLQR). Residues 16-36 (FAIPAVCGLIIFLGYYSQYLF) form a helical membrane-spanning segment. The Lumenal segment spans residues 37–51 (NTSADLAPGPLTCRE). A helical membrane pass occupies residues 52–72 (SLIFNILLVCLWLTYYQACTV). Topologically, residues 73–146 (DPGQYKFPPK…NCVSLQTFPH (74 aa)) are cytoplasmic. Positions 81-91 (PKEKEDGDNNN) are enriched in basic and acidic residues. The interval 81–101 (PKEKEDGDNNNKRGGRGPQKA) is disordered. Positions 102-152 (KWCKKCDAPKPPRAHHCRHCARCIPRMDHHCPWTGNCVSLQTFPHFLRFLV) constitute a DHHC domain. Catalysis depends on Cys-132, which acts as the S-palmitoyl cysteine intermediate. The chain crosses the membrane as a helical span at residues 147-166 (FLRFLVYTNAALVYFARLLW). The Lumenal portion of the chain corresponds to 167 to 178 (TRLYYGLWDQRH). Residues 179–201 (VPAYLGPSVGALLGCTMLSIAWF) form a helical membrane-spanning segment. Residues 202 to 486 (ATQFALMVLL…RKVKSNGVHE (285 aa)) are Cytoplasmic-facing. The segment at 314 to 420 (NDRVGMWPPP…QDGRAWMNSE (107 aa)) is disordered. Composition is skewed to basic and acidic residues over residues 324 to 333 (DPEKLRRERA) and 346 to 376 (LNTE…DLRR). The span at 386 to 399 (EEDEIMAELEEDEG) shows a compositional bias: acidic residues.

Belongs to the DHHC palmitoyltransferase family. PFA4 subfamily.

The protein resides in the endoplasmic reticulum membrane. It catalyses the reaction L-cysteinyl-[protein] + hexadecanoyl-CoA = S-hexadecanoyl-L-cysteinyl-[protein] + CoA. Its function is as follows. Mediates the reversible addition of palmitate to target proteins, thereby regulating their membrane association and biological function. The sequence is that of Palmitoyltransferase pfa4 from Neurospora crassa (strain ATCC 24698 / 74-OR23-1A / CBS 708.71 / DSM 1257 / FGSC 987).